Reading from the N-terminus, the 444-residue chain is MPAARTGTLAAVALILLCGAAVLGRPAPDDLCFADVRRTGMAPSRPLGPVLNLAASDLTSRVSVRAVDASRGCALALLDMAETVVPGGPRAADVVDVGWAYQDGDCMVPLAYRQYFNCTGGALPGQNVCAGLSETRIRGGFGTSDYALYGTSLVLRPGLYDRGTYIYFLGYGPDDIYVGSVTLMVGADIHKYPCGLDRGLGVALHHKSGPARPLTEDDATGDWACGCFPAVVEVDVVWGNVSAAELGLADPIDYADEGGEVEVLEDEAGSASGNLPQDDPDPDLADCRTVGLFSESDMFRTARGPESLLIGAVAKDVLTVPLNLPPGRSYEALRNASLECNSRPRETGDAAVVVMSLQEPARLERRPDARATDPEFGLFGLPDDPAVRRGILIGLAIALLVLLFSLVIVLVCACRLARAAKAARRARAATFAKSNPAYEPMLRV.

The N-terminal stretch at 1–24 (MPAARTGTLAAVALILLCGAAVLG) is a signal peptide. 3 N-linked (GlcNAc...) asparagine; by host glycosylation sites follow: asparagine 117, asparagine 240, and asparagine 335. A helical membrane pass occupies residues 390-414 (GILIGLAIALLVLLFSLVIVLVCAC).

Belongs to the herpesviridae glycoprotein G family.

It localises to the membrane. The sequence is that of Glycoprotein GX from Bos taurus (Bovine).